The chain runs to 466 residues: Ribulose bisphosphate carboxylase large chain (466 aa).

Lysine 4 is modified (N6,N6,N6-trimethyllysine). Asparagine 113 and threonine 163 together coordinate substrate. Lysine 165 acts as the Proton acceptor in catalysis. Lysine 167 serves as a coordination point for substrate. Lysine 191, aspartate 193, and glutamate 194 together coordinate Mg(2+). Lysine 191 carries the post-translational modification N6-carboxylysine. Histidine 284 serves as the catalytic Proton acceptor. Residues arginine 285, histidine 317, and serine 369 each contribute to the substrate site.

Belongs to the RuBisCO large chain family. Type I subfamily. In terms of assembly, heterohexadecamer of 8 large chains and 8 small chains; disulfide-linked. The disulfide link is formed within the large subunit homodimers. Mg(2+) is required as a cofactor. Post-translationally, the disulfide bond which can form in the large chain dimeric partners within the hexadecamer appears to be associated with oxidative stress and protein turnover.

It localises to the plastid. It is found in the chloroplast. The catalysed reaction is 2 (2R)-3-phosphoglycerate + 2 H(+) = D-ribulose 1,5-bisphosphate + CO2 + H2O. It carries out the reaction D-ribulose 1,5-bisphosphate + O2 = 2-phosphoglycolate + (2R)-3-phosphoglycerate + 2 H(+). Functionally, ruBisCO catalyzes two reactions: the carboxylation of D-ribulose 1,5-bisphosphate, the primary event in carbon dioxide fixation, as well as the oxidative fragmentation of the pentose substrate in the photorespiration process. Both reactions occur simultaneously and in competition at the same active site. The polypeptide is Ribulose bisphosphate carboxylase large chain (Pinguicula caerulea (Blueflower butterwort)).